Reading from the N-terminus, the 178-residue chain is uncharacterized protein (178 aa).

Helical transmembrane passes span 6 to 26 and 154 to 174; these read AIFG…VSGL and KELV…AMLI.

Its subcellular location is the cell membrane. This is an uncharacterized protein from Methanocaldococcus jannaschii (strain ATCC 43067 / DSM 2661 / JAL-1 / JCM 10045 / NBRC 100440) (Methanococcus jannaschii).